We begin with the raw amino-acid sequence, 282 residues long: Inositol oxygenase (282 aa).

The tract at residues methionine 1–phenylalanine 25 is disordered. Residues proline 12–serine 24 show a composition bias toward basic and acidic residues. Arginine 26 is a binding site for substrate. At serine 30 the chain carries Phosphoserine. Residue aspartate 82–serine 84 participates in substrate binding. Residues histidine 95, histidine 120, and aspartate 121 each coordinate Fe cation. Substrate is bound by residues lysine 124 and glycine 138–aspartate 139. Positions 191, 217, and 250 each coordinate Fe cation. A substrate-binding site is contributed by histidine 217–serine 218.

The protein belongs to the myo-inositol oxygenase family. Fe cation serves as cofactor. In terms of processing, the N-terminus is blocked. Kidney specific.

It localises to the cytoplasm. It catalyses the reaction myo-inositol + O2 = D-glucuronate + H2O + H(+). The protein operates within polyol metabolism; myo-inositol degradation into D-glucuronate; D-glucuronate from myo-inositol: step 1/1. This Sus scrofa (Pig) protein is Inositol oxygenase (MIOX).